Reading from the N-terminus, the 56-residue chain is Large ribosomal subunit protein bL32 (56 aa).

Residues 1 to 20 (MAVPKRRTSRSNTRSRRAQW) are compositionally biased toward basic residues. The segment at 1-26 (MAVPKRRTSRSNTRSRRAQWKAKAPA) is disordered.

Belongs to the bacterial ribosomal protein bL32 family.

The polypeptide is Large ribosomal subunit protein bL32 (Parafrankia sp. (strain EAN1pec)).